The sequence spans 2312 residues: Protein Ycf2 (2312 aa).

3 disordered regions span residues 170–191 (SSQL…GTED), 223–253 (TEIE…EMNN), and 942–1009 (KRKK…KRKE). Positions 232–242 (KGLSGSSSKSR) are enriched in low complexity. Composition is skewed to basic and acidic residues over residues 243–252 (LFTEGEKEMN) and 950–1007 (KRKE…PEKR). 1439-1446 (GSIGSGRS) lines the ATP pocket. Disordered stretches follow at residues 1513-1532 (YEDR…YEPG), 1857-1983 (LVGS…LLRP), and 2050-2166 (PAEE…DGFS). Over residues 1863 to 1963 (TEEEVEGTEE…GEGTEDEEVE (101 aa)) the composition is skewed to acidic residues. The span at 1964–1976 (GTEKDSSQFDNDR) shows a compositional bias: basic and acidic residues. Acidic residues-rich tracts occupy residues 2050 to 2067 (PAEE…EALE) and 2074 to 2149 (GEEE…ENDS).

Belongs to the Ycf2 family.

The protein resides in the plastid. It is found in the chloroplast stroma. Probable ATPase of unknown function. Its presence in a non-photosynthetic plant (Epifagus virginiana) and experiments in tobacco indicate that it has an essential function which is probably not related to photosynthesis. The protein is Protein Ycf2 of Oenothera parviflora (Small-flowered evening primrose).